The sequence spans 42 residues: Photosystem I reaction center subunit IX (42 aa).

A helical membrane pass occupies residues tyrosine 7–isoleucine 27.

The protein belongs to the PsaJ family.

Its subcellular location is the plastid. The protein resides in the chloroplast thylakoid membrane. Its function is as follows. May help in the organization of the PsaE and PsaF subunits. In Nephroselmis olivacea (Green alga), this protein is Photosystem I reaction center subunit IX.